The chain runs to 115 residues: MARVKRGNIARKRRNKILNLAKGFRGGNKNLFRTANQRVMKALCNAYRDRRRRKRDFRRLWISRINASARINGTNYSRLINGMKNSEIIINRKMLAQLALSDPQCFEKIVSTVNN.

The protein belongs to the bacterial ribosomal protein bL20 family.

Functionally, binds directly to 23S ribosomal RNA and is necessary for the in vitro assembly process of the 50S ribosomal subunit. It is not involved in the protein synthesizing functions of that subunit. This Prochlorococcus marinus subsp. pastoris (strain CCMP1986 / NIES-2087 / MED4) protein is Large ribosomal subunit protein bL20.